The sequence spans 1406 residues: DNA-directed RNA polymerase subunit beta' (1406 aa).

The Zn(2+) site is built by Cys-70, Cys-72, Cys-85, and Cys-88. Residues Asp-460, Asp-462, and Asp-464 each coordinate Mg(2+). Residues Cys-814, Cys-888, Cys-895, and Cys-898 each coordinate Zn(2+).

Belongs to the RNA polymerase beta' chain family. The RNAP catalytic core consists of 2 alpha, 1 beta, 1 beta' and 1 omega subunit. When a sigma factor is associated with the core the holoenzyme is formed, which can initiate transcription. It depends on Mg(2+) as a cofactor. Requires Zn(2+) as cofactor.

It catalyses the reaction RNA(n) + a ribonucleoside 5'-triphosphate = RNA(n+1) + diphosphate. Functionally, DNA-dependent RNA polymerase catalyzes the transcription of DNA into RNA using the four ribonucleoside triphosphates as substrates. In Colwellia psychrerythraea (strain 34H / ATCC BAA-681) (Vibrio psychroerythus), this protein is DNA-directed RNA polymerase subunit beta'.